The following is a 101-amino-acid chain: Small ribosomal subunit protein uS14 (101 aa).

This sequence belongs to the universal ribosomal protein uS14 family. Part of the 30S ribosomal subunit. Contacts proteins S3 and S10.

In terms of biological role, binds 16S rRNA, required for the assembly of 30S particles and may also be responsible for determining the conformation of the 16S rRNA at the A site. This chain is Small ribosomal subunit protein uS14, found in Phenylobacterium zucineum (strain HLK1).